A 126-amino-acid polypeptide reads, in one-letter code: Histone H2B type 1-K (126 aa).

A compositionally biased stretch (low complexity) spans 1–12 (MPEPAKSAPAPK). The disordered stretch occupies residues 1–36 (MPEPAKSAPAPKKGSKKAVTKAQKKDGKKRKRSRKE). P2 carries the post-translational modification N-acetylproline. E3 is modified (ADP-ribosyl glutamic acid). K6 carries the N6-(2-hydroxyisobutyryl)lysine; alternate modification. The residue at position 6 (K6) is an N6-(beta-hydroxybutyryl)lysine; alternate. K6 carries the post-translational modification N6-acetyllysine; alternate. At K6 the chain carries N6-butyryllysine; alternate. Residue K6 is modified to N6-crotonyllysine; alternate. Position 6 is an N6-lactoyllysine; alternate (K6). Residue K6 forms a Glycyl lysine isopeptide (Lys-Gly) (interchain with G-Cter in SUMO2); alternate linkage. ADP-ribosylserine is present on S7. The residue at position 12 (K12) is an N6-(beta-hydroxybutyryl)lysine; alternate. N6-acetyllysine; alternate is present on residues K12 and K13. 2 positions are modified to N6-crotonyllysine; alternate: K12 and K13. At K12 the chain carries N6-lactoyllysine; alternate. At K13 the chain carries N6-(2-hydroxyisobutyryl)lysine; alternate. A Phosphoserine; by STK4/MST1 modification is found at S15. K16, K17, K21, and K24 each carry N6-acetyllysine; alternate. 4 positions are modified to N6-crotonyllysine; alternate: K16, K17, K21, and K24. N6-lactoyllysine; alternate is present on residues K16, K17, K21, and K24. K17 is subject to N6-glutaryllysine; alternate. Residues K21 and K24 each carry the N6-(2-hydroxyisobutyryl)lysine; alternate modification. The residue at position 21 (K21) is an N6-(beta-hydroxybutyryl)lysine; alternate. Residue K21 is modified to N6-butyryllysine; alternate. K21 is covalently cross-linked (Glycyl lysine isopeptide (Lys-Gly) (interchain with G-Cter in SUMO2); alternate). At K25 the chain carries N6-(2-hydroxyisobutyryl)lysine. K35 bears the N6-(2-hydroxyisobutyryl)lysine; alternate mark. The residue at position 35 (K35) is an N6-(beta-hydroxybutyryl)lysine; alternate. Residue K35 is modified to N6-crotonyllysine; alternate. An N6-glutaryllysine; alternate modification is found at K35. K35 is subject to N6-succinyllysine; alternate. A Glycyl lysine isopeptide (Lys-Gly) (interchain with G-Cter in ubiquitin); alternate cross-link involves residue K35. PolyADP-ribosyl glutamic acid is present on E36. The residue at position 37 (S37) is a Phosphoserine; by AMPK. Residues K44, K47, and K58 each carry the N6-(2-hydroxyisobutyryl)lysine; alternate modification. K44 is subject to N6-lactoyllysine; alternate. Residues K44 and K47 each carry the N6-glutaryllysine; alternate modification. At K47 the chain carries N6-methyllysine; alternate. K58 carries the N6,N6-dimethyllysine; alternate modification. R80 is modified (dimethylated arginine). K86 is subject to N6-(2-hydroxyisobutyryl)lysine; alternate. K86 is modified (N6-acetyllysine; alternate). K86 is subject to N6-lactoyllysine; alternate. N6,N6,N6-trimethyllysine; alternate is present on K86. Omega-N-methylarginine occurs at positions 87 and 93. K109 carries the post-translational modification N6-(2-hydroxyisobutyryl)lysine; alternate. The residue at position 109 (K109) is an N6-lactoyllysine; alternate. K109 is subject to N6-glutaryllysine; alternate. K109 is modified (N6-methyllysine; alternate). S113 carries an O-linked (GlcNAc) serine glycan. A Phosphothreonine modification is found at T116. K117 and K121 each carry N6-(2-hydroxyisobutyryl)lysine; alternate. K117 is modified (N6-(beta-hydroxybutyryl)lysine; alternate). Residues K117 and K121 each carry the N6-lactoyllysine; alternate modification. Residues K117 and K121 each carry the N6-glutaryllysine; alternate modification. 2 positions are modified to N6-succinyllysine; alternate: K117 and K121. K117 is modified (N6-methylated lysine; alternate). Residue K121 forms a Glycyl lysine isopeptide (Lys-Gly) (interchain with G-Cter in ubiquitin); alternate linkage.

It belongs to the histone H2B family. The nucleosome is a histone octamer containing two molecules each of H2A, H2B, H3 and H4 assembled in one H3-H4 heterotetramer and two H2A-H2B heterodimers. The octamer wraps approximately 147 bp of DNA. Post-translationally, monoubiquitination at Lys-35 (H2BK34Ub) by the MSL1/MSL2 dimer is required for histone H3 'Lys-4' (H3K4me) and 'Lys-79' (H3K79me) methylation and transcription activation at specific gene loci, such as HOXA9 and MEIS1 loci. Similarly, monoubiquitination at Lys-121 (H2BK120Ub) by the RNF20/40 complex gives a specific tag for epigenetic transcriptional activation and is also prerequisite for histone H3 'Lys-4' and 'Lys-79' methylation. It also functions cooperatively with the FACT dimer to stimulate elongation by RNA polymerase II. H2BK120Ub also acts as a regulator of mRNA splicing: deubiquitination by USP49 is required for efficient cotranscriptional splicing of a large set of exons. In terms of processing, phosphorylated on Ser-15 (H2BS14ph) by STK4/MST1 during apoptosis; which facilitates apoptotic chromatin condensation. Also phosphorylated on Ser-15 in response to DNA double strand breaks (DSBs), and in correlation with somatic hypermutation and immunoglobulin class-switch recombination. Phosphorylation at Ser-37 (H2BS36ph) by AMPK in response to stress promotes transcription. GlcNAcylation at Ser-113 promotes monoubiquitination of Lys-121. It fluctuates in response to extracellular glucose, and associates with transcribed genes. Post-translationally, ADP-ribosylated by PARP1 or PARP2 on Ser-7 (H2BS6ADPr) in response to DNA damage. H2BS6ADPr promotes recruitment of CHD1L. Mono-ADP-ribosylated on Glu-3 (H2BE2ADPr) by PARP3 in response to single-strand breaks. Poly ADP-ribosylation on Glu-36 (H2BE35ADPr) by PARP1 regulates adipogenesis: it inhibits phosphorylation at Ser-37 (H2BS36ph), thereby blocking expression of pro-adipogenetic genes. In terms of processing, crotonylation (Kcr) is specifically present in male germ cells and marks testis-specific genes in post-meiotic cells, including X-linked genes that escape sex chromosome inactivation in haploid cells. Crotonylation marks active promoters and enhancers and confers resistance to transcriptional repressors. It is also associated with post-meiotically activated genes on autosomes. Lactylated in macrophages by EP300/P300 by using lactoyl-CoA directly derived from endogenous or exogenous lactate, leading to stimulates gene transcription.

It is found in the nucleus. Its subcellular location is the chromosome. In terms of biological role, core component of nucleosome. Nucleosomes wrap and compact DNA into chromatin, limiting DNA accessibility to the cellular machineries which require DNA as a template. Histones thereby play a central role in transcription regulation, DNA repair, DNA replication and chromosomal stability. DNA accessibility is regulated via a complex set of post-translational modifications of histones, also called histone code, and nucleosome remodeling. The protein is Histone H2B type 1-K of Macaca fascicularis (Crab-eating macaque).